The sequence spans 98 residues: NADH-ubiquinone oxidoreductase chain 4L (98 aa).

3 consecutive transmembrane segments (helical) span residues 1–21 (MPLI…GVLI), 26–46 (LMSS…LVSL), and 61–81 (LILL…LVMV).

Belongs to the complex I subunit 4L family. As to quaternary structure, core subunit of respiratory chain NADH dehydrogenase (Complex I) which is composed of 45 different subunits.

The protein resides in the mitochondrion inner membrane. It carries out the reaction a ubiquinone + NADH + 5 H(+)(in) = a ubiquinol + NAD(+) + 4 H(+)(out). Its function is as follows. Core subunit of the mitochondrial membrane respiratory chain NADH dehydrogenase (Complex I) which catalyzes electron transfer from NADH through the respiratory chain, using ubiquinone as an electron acceptor. Part of the enzyme membrane arm which is embedded in the lipid bilayer and involved in proton translocation. The sequence is that of NADH-ubiquinone oxidoreductase chain 4L (MT-ND4L) from Nycticebus coucang (Slow loris).